The following is a 276-amino-acid chain: 3-methyl-2-oxobutanoate hydroxymethyltransferase (276 aa).

The Mg(2+) site is built by D46 and D85. Residues 46–47, D85, and K115 contribute to the 3-methyl-2-oxobutanoate site; that span reads DS. E117 serves as a coordination point for Mg(2+). E184 serves as the catalytic Proton acceptor.

It belongs to the PanB family. As to quaternary structure, homodecamer; pentamer of dimers. Mg(2+) serves as cofactor.

It localises to the cytoplasm. It carries out the reaction 3-methyl-2-oxobutanoate + (6R)-5,10-methylene-5,6,7,8-tetrahydrofolate + H2O = 2-dehydropantoate + (6S)-5,6,7,8-tetrahydrofolate. Its pathway is cofactor biosynthesis; (R)-pantothenate biosynthesis; (R)-pantoate from 3-methyl-2-oxobutanoate: step 1/2. In terms of biological role, catalyzes the reversible reaction in which hydroxymethyl group from 5,10-methylenetetrahydrofolate is transferred onto alpha-ketoisovalerate to form ketopantoate. This chain is 3-methyl-2-oxobutanoate hydroxymethyltransferase, found in Heliobacterium modesticaldum (strain ATCC 51547 / Ice1).